Here is a 178-residue protein sequence, read N- to C-terminus: Beta-lactoglobulin-1A/1C (178 aa).

An N-terminal signal peptide occupies residues 1–18; it reads MRCLLLTLGLALLCGVQA. Cystine bridges form between cysteine 84/cysteine 176 and cysteine 124/cysteine 137.

This sequence belongs to the calycin superfamily. Lipocalin family. In terms of assembly, under physiological conditions beta-lactoglobulin exists as an equilibrium mixture of monomeric and dimeric forms.

The protein resides in the secreted. Functionally, lactoglobulin is the primary component of whey, it binds retinol and is probably involved in the transport of that molecule. In Sus scrofa (Pig), this protein is Beta-lactoglobulin-1A/1C.